The primary structure comprises 372 residues: Adaptive-response sensory kinase SasA (372 aa).

One can recognise a Histidine kinase domain in the interval 147-360 (MVAHELRTPL…CFHFTVPVWQ (214 aa)). Residue His150 is modified to Phosphohistidine; by autocatalysis.

As to quaternary structure, homooligomerizes. Interacts with KaiC. Participates in the KaiBC complex, whose core is composed of a KaiC homohexamer and 6 KaiB.

It carries out the reaction ATP + protein L-histidine = ADP + protein N-phospho-L-histidine.. Member of the two-component regulatory system SasA/RpaA involved in genome-wide circadian gene expression. One of several clock output pathways. Participates in the Kai clock protein complex, the main circadian regulator in cyanobacteria, via its interaction with KaiC. KaiC enhances the autophosphorylation activity of SasA, which then transfers its phosphate group to RpaA to activate it. In addition to its output function, recruits fold-shifted KaiB (KaiB(fs)) to KaiC to cooperatively form the KaiB(6):KaiC(6) complex (independent of SasA kinase activity). Required for robustness of the circadian rhythm of gene expression and is involved in clock output, also required for adaptation to light/dark cycles. The protein is Adaptive-response sensory kinase SasA of Prochlorococcus marinus (strain AS9601).